A 486-amino-acid chain; its full sequence is Beta-barrel assembly-enhancing protease (486 aa).

The first 19 residues, 1–19 (MIATLLSSLLLTGPISAGA), serve as a signal peptide directing secretion. Residue H134 coordinates Zn(2+). E135 is a catalytic residue. Residues H138 and E199 each contribute to the Zn(2+) site. D203 (proton donor) is an active-site residue.

It belongs to the peptidase M48 family. BepA subfamily. Zn(2+) serves as cofactor.

The protein resides in the periplasm. Functionally, functions both as a chaperone and a metalloprotease. Maintains the integrity of the outer membrane by promoting either the assembly or the elimination of outer membrane proteins, depending on their folding state. This is Beta-barrel assembly-enhancing protease from Yersinia pestis.